The chain runs to 335 residues: Biotin synthase (335 aa).

Positions tyrosine 46 to arginine 274 constitute a Radical SAM core domain. [4Fe-4S] cluster is bound by residues cysteine 61, cysteine 65, and cysteine 68. Positions 105, 137, 197, and 269 each coordinate [2Fe-2S] cluster.

This sequence belongs to the radical SAM superfamily. Biotin synthase family. As to quaternary structure, homodimer. [4Fe-4S] cluster is required as a cofactor. It depends on [2Fe-2S] cluster as a cofactor.

The catalysed reaction is (4R,5S)-dethiobiotin + (sulfur carrier)-SH + 2 reduced [2Fe-2S]-[ferredoxin] + 2 S-adenosyl-L-methionine = (sulfur carrier)-H + biotin + 2 5'-deoxyadenosine + 2 L-methionine + 2 oxidized [2Fe-2S]-[ferredoxin]. It participates in cofactor biosynthesis; biotin biosynthesis; biotin from 7,8-diaminononanoate: step 2/2. In terms of biological role, catalyzes the conversion of dethiobiotin (DTB) to biotin by the insertion of a sulfur atom into dethiobiotin via a radical-based mechanism. The protein is Biotin synthase of Prochlorococcus marinus (strain MIT 9312).